We begin with the raw amino-acid sequence, 249 residues long: Probable transcriptional regulatory protein FN1661 (249 aa).

Residues 1-10 (MSGHSKWNNI) are compositionally biased toward polar residues. Residues 1 to 20 (MSGHSKWNNIQHRKGAQDKK) form a disordered region.

The protein belongs to the TACO1 family.

It is found in the cytoplasm. This Fusobacterium nucleatum subsp. nucleatum (strain ATCC 25586 / DSM 15643 / BCRC 10681 / CIP 101130 / JCM 8532 / KCTC 2640 / LMG 13131 / VPI 4355) protein is Probable transcriptional regulatory protein FN1661.